A 514-amino-acid chain; its full sequence is 1-pyrroline-5-carboxylate dehydrogenase (514 aa).

Residues glutamate 286 and cysteine 320 contribute to the active site.

Belongs to the aldehyde dehydrogenase family. RocA subfamily.

It carries out the reaction L-glutamate 5-semialdehyde + NAD(+) + H2O = L-glutamate + NADH + 2 H(+). The protein operates within amino-acid degradation; L-proline degradation into L-glutamate; L-glutamate from L-proline: step 2/2. The chain is 1-pyrroline-5-carboxylate dehydrogenase from Staphylococcus haemolyticus (strain JCSC1435).